A 419-amino-acid polypeptide reads, in one-letter code: LWamide neuropeptides (419 aa).

The signal sequence occupies residues 1 to 27 (MEKEMRNLMLLVLLTVILDNGIGKCNA). The interval 27-48 (AKSEEDQDGNARNNRIDKNDDN) is disordered. The propeptide occupies 28-104 (KSEEDQDGNA…ENLDIDSTVQ (77 aa)). W110 is subject to Tryptophan amide. Residues 113-140 (EADFDNTRAHDSAQISDEKQSGLWVGDA) constitute a propeptide that is removed on maturation. Positions 120 to 132 (RAHDSAQISDEKQ) are enriched in basic and acidic residues. Residues 120–332 (RAHDSAQISD…PGLWGRQVED (213 aa)) form a disordered region. At W146 the chain carries Tryptophan amide. The propeptide occupies 149–150 (DA). A Tryptophan amide modification is found at W156. Residues 159-160 (DA) constitute a propeptide that is removed on maturation. W166 is subject to Tryptophan amide. A propeptide spanning residues 169–170 (DA) is cleaved from the precursor. A Tryptophan amide modification is found at W176. Positions 179-180 (DA) are excised as a propeptide. The residue at position 186 (W186) is a Tryptophan amide. A propeptide spanning residues 189-190 (DA) is cleaved from the precursor. Tryptophan amide is present on W196. Residues 199-200 (DA) constitute a propeptide that is removed on maturation. At W206 the chain carries Tryptophan amide. The propeptide occupies 209–210 (DA). At W216 the chain carries Tryptophan amide. Positions 218–220 (GDA) are cleaved as a propeptide — seems to have a sequencing error or a mutation in position 218; Gly instead of Arg. W226 carries the tryptophan amide modification. Positions 229 to 230 (DA) are excised as a propeptide. W236 is subject to Tryptophan amide. A propeptide spanning residues 239–240 (DA) is cleaved from the precursor. At W246 the chain carries Tryptophan amide. Positions 249–250 (DA) are excised as a propeptide. W256 bears the Tryptophan amide mark. The propeptide occupies 259 to 260 (DA). The residue at position 266 (W266) is a Tryptophan amide. Residues 269–270 (DA) constitute a propeptide that is removed on maturation. W276 carries the post-translational modification Tryptophan amide. A propeptide spanning residues 279–280 (DT) is cleaved from the precursor. A Tryptophan amide modification is found at W286. A propeptide spanning residues 289 to 290 (DA) is cleaved from the precursor. W296 carries the post-translational modification Tryptophan amide. 2 consecutive propeptides follow at residues 299–300 (DA) and 309–320 (DNNVIKSRSDDA). W326 is modified (tryptophan amide). A propeptide spanning residues 329–419 (QVEDGPTKIW…RRNNKKNNKF (91 aa)) is cleaved from the precursor.

It belongs to the LWamide neuropeptide family. In planula larvae, expressed in a narrow ring of ectodermal neurosensory cells around the widest circumference at the anterior of the larvae. In primary polyps, expression is confined to endodermal cells of the hypostome. In mature polyps, expression is strong in the epidermis from the tentacle level to the base of the polyp and weak in the gastrodermal cells in the apical hypostome.

It localises to the secreted. In terms of biological role, LWamide peptides may be involved in induction of metamorphosis. In Hydractinia echinata (Snail fur), this protein is LWamide neuropeptides.